Reading from the N-terminus, the 944-residue chain is MTQLASSYDPSSFESRLYAQWESAGHFKPSGSGEPYTVLLPPPNVTGTLHMGHAFQQTLMDALVRYHRMRGYDTLWQVGTDHAGIATEMVVSRNLALEGKGETRDTLGREGFIAKVWEWKAQSGDTIERQMRRLGTSSDWSRSTFTMDPQPSAAVTEAFVRWYEQGLIYRGQRLVNWDPVLKTAISDLEVENVEEDGFLWSIRYPLADGVTYEHVEHDADGVETLRETRDYLVVATTRPETMLGDTAVMVHPDDARYATLHAAQIVLPLTGRLVPVITDDYVDRAFGTGVVKVTPAHDFNDYQVGVRHDLPLINLFTVTAAINDNAPERYRGLDRYDARKLVLSELEDLGLLVETKPHKLQVPRGDRTGQVIEPYLTDQWFVKMDALAKRGLELVESGQVKFVPPNWINTYRHWMENIQDWCISRQLWWGHRIPAWFDEAGKCYVGHDEAQVRATHGLGAEVALHQDSDVLETWFSSQLWPFSTLGWPDAQAMDERGFARYLPSSVLVTGFDIIFFWVARMIMATDSFTGQVPFRDVYITGLIRDAQGQKMSKSKGNVLDPLDIIDGISIEDLVAKRTSGLMQPRMAEKIEKATRKEFPDGIIAHGADALRFTIAALATHGRDIKFDLGRAEGYKNFCNKLWNATRFALMNTEGAQFSGVPQPQTETERWILARLDAVAAEAQAHYANYRFDLLAQTLYEFAWNAFCDWFVELAKPALNGAVQDAADSTRHTLLYVLEALLRLLHPLTPFVTEELWQQVAPRLGITGDTISLQAFPQRGDVDTSGYAGAEADIEWLKAMVSALRRVRSELNVPPSKQVRLWLQAGSSDDRARVARFASQLAFLLKLEAIDWLAAGQEAPPAAAAIVGELTLLVPLEGLVDMDAERTRLDKEIKRVENEIGKCNGKLGNATFVQNAPAAVVEQERARLNDWTTQLTGLREQRAKL.

Positions 43–53 (PNVTGTLHMGH) match the 'HIGH' region motif. The short motif at 550–554 (KMSKS) is the 'KMSKS' region element. K553 is a binding site for ATP. Positions 878–944 (LVDMDAERTR…TGLREQRAKL (67 aa)) form a coiled coil.

This sequence belongs to the class-I aminoacyl-tRNA synthetase family. ValS type 1 subfamily. As to quaternary structure, monomer.

It is found in the cytoplasm. It catalyses the reaction tRNA(Val) + L-valine + ATP = L-valyl-tRNA(Val) + AMP + diphosphate. Catalyzes the attachment of valine to tRNA(Val). As ValRS can inadvertently accommodate and process structurally similar amino acids such as threonine, to avoid such errors, it has a 'posttransfer' editing activity that hydrolyzes mischarged Thr-tRNA(Val) in a tRNA-dependent manner. The sequence is that of Valine--tRNA ligase from Xanthomonas campestris pv. campestris (strain 8004).